A 95-amino-acid chain; its full sequence is Co-chaperonin GroES (95 aa).

The protein belongs to the GroES chaperonin family. Heptamer of 7 subunits arranged in a ring. Interacts with the chaperonin GroEL.

The protein resides in the cytoplasm. In terms of biological role, together with the chaperonin GroEL, plays an essential role in assisting protein folding. The GroEL-GroES system forms a nano-cage that allows encapsulation of the non-native substrate proteins and provides a physical environment optimized to promote and accelerate protein folding. GroES binds to the apical surface of the GroEL ring, thereby capping the opening of the GroEL channel. In Francisella philomiragia subsp. philomiragia (strain ATCC 25017 / CCUG 19701 / FSC 153 / O#319-036), this protein is Co-chaperonin GroES.